The primary structure comprises 395 residues: ATP synthase subunit a (395 aa).

The next 5 membrane-spanning stretches (helical) occupy residues 153–173 (FTNP…LVYF), 246–266 (HFLI…IVGF), 273–293 (FLSF…LVLL), 313–333 (MMAG…MLCM), and 339–359 (FIGD…ELGV).

The protein belongs to the ATPase A chain family. F-type ATPases have 2 components, CF(1) - the catalytic core - and CF(0) - the membrane proton channel. CF(1) has five subunits: alpha(3), beta(3), gamma(1), delta(1), epsilon(1). CF(0) has three main subunits: a, b and c.

It localises to the mitochondrion inner membrane. Mitochondrial membrane ATP synthase (F(1)F(0) ATP synthase or Complex V) produces ATP from ADP in the presence of a proton gradient across the membrane which is generated by electron transport complexes of the respiratory chain. F-type ATPases consist of two structural domains, F(1) - containing the extramembraneous catalytic core and F(0) - containing the membrane proton channel, linked together by a central stalk and a peripheral stalk. During catalysis, ATP synthesis in the catalytic domain of F(1) is coupled via a rotary mechanism of the central stalk subunits to proton translocation. Key component of the proton channel; it may play a direct role in the translocation of protons across the membrane. The chain is ATP synthase subunit a (ATP6) from Nicotiana tabacum (Common tobacco).